A 374-amino-acid chain; its full sequence is MGEFDREELTIIRKFEHIEHCLKRNVQAHVTNGFEDVHFVHMSLPEIDKDEIDLSVEFLGRKFDYPIFIAGMTGGTKGSQLAGRINKTLAKAAQELNIPMGVGSQRAMIRKPETWESYYVRDVAPDVFLVGNLGAPQFSETIRERYGLEEALKAVETIQADALAIHMNPLQESVQPEGDTQYRGVLKALAELKAEFPYPIIAKETGAGVSMEVAVRLESIGIDAIDVGGLGGTSWSGVEYYRAKDEIGKDLALRFWDWGIKTAISVAEVRYATELPIIATGGMRDGIAMAKALAMGATFAGVALPLLKPAVKGDVEGVIKILRRYIEEIRNAMFLVGARNVEELRKVPLVITGFTREWLEQRIDLPSYLRNRGI.

Substrate is bound at residue Arg13–Lys14. Residues Gly71–Thr73, Ser104, and Asn132 each bind FMN. Ser104–Arg106 is a substrate binding site. Residue Gln171 participates in substrate binding. Glu172 serves as a coordination point for Mg(2+). FMN contacts are provided by residues Lys203, Thr233, Gly282–Arg284, and Ala303–Leu304.

This sequence belongs to the IPP isomerase type 2 family. Homooctamer. Dimer of tetramers. It depends on FMN as a cofactor. NADPH serves as cofactor. Requires Mg(2+) as cofactor.

It localises to the cytoplasm. The enzyme catalyses isopentenyl diphosphate = dimethylallyl diphosphate. Involved in the biosynthesis of isoprenoids. Catalyzes the 1,3-allylic rearrangement of the homoallylic substrate isopentenyl (IPP) to its allylic isomer, dimethylallyl diphosphate (DMAPP). This Thermococcus kodakarensis (strain ATCC BAA-918 / JCM 12380 / KOD1) (Pyrococcus kodakaraensis (strain KOD1)) protein is Isopentenyl-diphosphate delta-isomerase.